The sequence spans 207 residues: ConoCAP (207 aa).

The signal sequence occupies residues 1-21; sequence MVSLGHVLFVILLPVLLPVAA. The propeptide occupies 22 to 48; sequence DDPDDQMLSQISLPSSSRSEYDDNDVS. C53 and C59 are joined by a disulfide. Glycine amide is present on G60. A propeptide spanning residues 63 to 82 is cleaved from the precursor; the sequence is HRDRSRRQERYGKRLIPVLA. C87 and C92 form a disulfide bridge. The residue at position 94 (N94) is an Asparagine amide. The propeptide occupies 98-160; it reads SLSGAGPALS…RDPAASGDLS (63 aa). A disordered region spans residues 131–155; it reads ARHEQQQQLLQQREQRGLESRDPAA. The segment covering 143 to 152 has biased composition (basic and acidic residues); the sequence is REQRGLESRD. An intrachain disulfide couples C165 to C171. At G173 the chain carries Glycine amide. The propeptide occupies 177 to 207; it reads TLYSPWLERMNEVADDRSARNALCTRLGWRE.

In terms of tissue distribution, expressed by the venom duct.

The protein resides in the secreted. In terms of biological role, in contrast to other members of the CCAP family which are cardio-accelerators, conoCAP-a decreases the heart frequency in Drosophila larvae (26%), rats and zebrafish embryos. It also reduces the blood pressure in rats. It decreases systolic calcium in ventricular cardiac myocytes, indicating that it may act via impairment of intracellular calcium trafficking. Functionally, synthetic conoCAP-b decreases the heart frequency of 23% in Drosophila larvae. Its function is as follows. Synthetic conoCAP-c decreases the heart frequency of 12% in Drosophila larvae. In Conus villepinii (Villepin's cone), this protein is ConoCAP (conoCAP).